Consider the following 79-residue polypeptide: Acyl carrier protein (79 aa).

One can recognise a Carrier domain in the interval 2-77 (ENIEQRVKKI…QAIDYVNAHL (76 aa)). Ser37 is subject to O-(pantetheine 4'-phosphoryl)serine.

The protein belongs to the acyl carrier protein (ACP) family. In terms of processing, 4'-phosphopantetheine is transferred from CoA to a specific serine of apo-ACP by AcpS. This modification is essential for activity because fatty acids are bound in thioester linkage to the sulfhydryl of the prosthetic group.

Its subcellular location is the cytoplasm. It functions in the pathway lipid metabolism; fatty acid biosynthesis. Functionally, carrier of the growing fatty acid chain in fatty acid biosynthesis. In Azoarcus sp. (strain BH72), this protein is Acyl carrier protein.